A 484-amino-acid polypeptide reads, in one-letter code: Protein nucleotidyltransferase YdiU (484 aa).

8 residues coordinate ATP: Gly-81, Gly-83, Arg-84, Lys-103, Asp-115, Gly-116, Arg-166, and Arg-173. Asp-244 serves as the catalytic Proton acceptor. Residues Asn-245 and Asp-254 each coordinate Mg(2+). Asp-254 lines the ATP pocket.

It belongs to the SELO family. Mg(2+) serves as cofactor. It depends on Mn(2+) as a cofactor.

It catalyses the reaction L-seryl-[protein] + ATP = 3-O-(5'-adenylyl)-L-seryl-[protein] + diphosphate. The enzyme catalyses L-threonyl-[protein] + ATP = 3-O-(5'-adenylyl)-L-threonyl-[protein] + diphosphate. The catalysed reaction is L-tyrosyl-[protein] + ATP = O-(5'-adenylyl)-L-tyrosyl-[protein] + diphosphate. It carries out the reaction L-histidyl-[protein] + UTP = N(tele)-(5'-uridylyl)-L-histidyl-[protein] + diphosphate. It catalyses the reaction L-seryl-[protein] + UTP = O-(5'-uridylyl)-L-seryl-[protein] + diphosphate. The enzyme catalyses L-tyrosyl-[protein] + UTP = O-(5'-uridylyl)-L-tyrosyl-[protein] + diphosphate. In terms of biological role, nucleotidyltransferase involved in the post-translational modification of proteins. It can catalyze the addition of adenosine monophosphate (AMP) or uridine monophosphate (UMP) to a protein, resulting in modifications known as AMPylation and UMPylation. In Shewanella baltica (strain OS223), this protein is Protein nucleotidyltransferase YdiU.